The following is a 543-amino-acid chain: MEPDVVEIPPPPLIASGSRTRKPRKAVPEVIDVESYEFRNVGVVKDNNVVDKKNKGKAIQVDSFSFNNVQSHHHGSSLLNLETFQDYYGHKNIPFSEFANQPIDVDDYSMYQDVLDPKDVPAGAEVTVPWGLNSSSKGTAKSSISIMRSQSMKGYGTVSLATTNVPQLWDYTLPQQNQAIYSSVSFSAVQPQTPDVVMVTNPTPNPFSYDASASSSHPIAAEPISSVQDSSNARKLKEEFLRDFKRFDTVEDFSDHHYASKGKSSKQHSKNWVKKVQADWKILENDLPEAISVRACESRMDLLRAVIIGAEGTPYHDGLFFFDIQFPDTYPSVPPNVHYHSGGLRINPNLYNCGKVCLSLLGTWAGSAREKWLPNESTMLQLLVSIQALILNEKPYFNEPGYVQSAGTASGESKSKVYSENVFLLSLKTMVYSIRRPPQHFEEYVQNHYFVRSHDIVKACNAYKAGAPLGSMVKGGVQDLEEARQSGSKKFKTDVASFMQTVVDEFVKLGVKELAEKPEPPMSNANTENQSKKKTRKRSRSSR.

A disordered region spans residues 1–21 (MEPDVVEIPPPPLIASGSRTR). Residues 271–431 (NWVKKVQADW…VFLLSLKTMV (161 aa)) form the UBC core domain. Cysteine 357 acts as the Glycyl thioester intermediate in catalysis. Residues 514 to 543 (LAEKPEPPMSNANTENQSKKKTRKRSRSSR) are disordered. Residues 532-543 (KKKTRKRSRSSR) are compositionally biased toward basic residues.

This sequence belongs to the ubiquitin-conjugating enzyme family.

It carries out the reaction S-ubiquitinyl-[E1 ubiquitin-activating enzyme]-L-cysteine + [E2 ubiquitin-conjugating enzyme]-L-cysteine = [E1 ubiquitin-activating enzyme]-L-cysteine + S-ubiquitinyl-[E2 ubiquitin-conjugating enzyme]-L-cysteine.. It participates in protein modification; protein ubiquitination. In terms of biological role, accepts the ubiquitin from the E1 complex and catalyzes its covalent attachment to other proteins. This chain is Probable ubiquitin-conjugating enzyme E2 26 (UBC26), found in Arabidopsis thaliana (Mouse-ear cress).